A 335-amino-acid polypeptide reads, in one-letter code: GTPase Obg (335 aa).

The 158-residue stretch at 1–158 (MFLDQITIEL…RQVELELKLI (158 aa)) folds into the Obg domain. Residues 159 to 334 (ADIGLVGFPN…LNSLFTNRLS (176 aa)) enclose the OBG-type G domain. GTP-binding positions include 165-172 (GFPNAGKS), 190-194 (FTTLQ), 215-218 (DIPG), 285-288 (NKID), and 315-317 (SGL). Mg(2+) is bound by residues serine 172 and threonine 192.

This sequence belongs to the TRAFAC class OBG-HflX-like GTPase superfamily. OBG GTPase family. As to quaternary structure, monomer. Mg(2+) is required as a cofactor.

The protein localises to the cytoplasm. Its function is as follows. An essential GTPase which binds GTP, GDP and possibly (p)ppGpp with moderate affinity, with high nucleotide exchange rates and a fairly low GTP hydrolysis rate. Plays a role in control of the cell cycle, stress response, ribosome biogenesis and in those bacteria that undergo differentiation, in morphogenesis control. The polypeptide is GTPase Obg (Chlamydia caviae (strain ATCC VR-813 / DSM 19441 / 03DC25 / GPIC) (Chlamydophila caviae)).